We begin with the raw amino-acid sequence, 101 residues long: MLSLSHYLVLGAILFAISVVGIFLNRKNLIVLLMAIELMLLAVNLNFIAFSHYLGDLAGQIFVFFILTVAAAESAIGLAILVVLFRNLRTIHVDDLDSLKG.

The next 3 helical transmembrane spans lie at 4-24, 30-50, and 61-81; these read LSHY…GIFL, IVLL…FIAF, and IFVF…LAIL.

It belongs to the complex I subunit 4L family. NDH-1 is composed of 14 different subunits. Subunits NuoA, H, J, K, L, M, N constitute the membrane sector of the complex.

The protein resides in the cell inner membrane. The enzyme catalyses a quinone + NADH + 5 H(+)(in) = a quinol + NAD(+) + 4 H(+)(out). NDH-1 shuttles electrons from NADH, via FMN and iron-sulfur (Fe-S) centers, to quinones in the respiratory chain. The immediate electron acceptor for the enzyme in this species is believed to be ubiquinone. Couples the redox reaction to proton translocation (for every two electrons transferred, four hydrogen ions are translocated across the cytoplasmic membrane), and thus conserves the redox energy in a proton gradient. The sequence is that of NADH-quinone oxidoreductase subunit K from Aromatoleum aromaticum (strain DSM 19018 / LMG 30748 / EbN1) (Azoarcus sp. (strain EbN1)).